The sequence spans 346 residues: Phosphoribosylformylglycinamidine cyclo-ligase (346 aa).

It belongs to the AIR synthase family.

Its subcellular location is the cytoplasm. The enzyme catalyses 2-formamido-N(1)-(5-O-phospho-beta-D-ribosyl)acetamidine + ATP = 5-amino-1-(5-phospho-beta-D-ribosyl)imidazole + ADP + phosphate + H(+). The protein operates within purine metabolism; IMP biosynthesis via de novo pathway; 5-amino-1-(5-phospho-D-ribosyl)imidazole from N(2)-formyl-N(1)-(5-phospho-D-ribosyl)glycinamide: step 2/2. The chain is Phosphoribosylformylglycinamidine cyclo-ligase from Bacillus cereus (strain ATCC 10987 / NRS 248).